The chain runs to 217 residues: Phosphoenolpyruvate guanylyltransferase (217 aa).

The phosphoenolpyruvate site is built by T150, G165, and S168.

This sequence belongs to the CofC family.

It carries out the reaction phosphoenolpyruvate + GTP + H(+) = enolpyruvoyl-2-diphospho-5'-guanosine + diphosphate. Its pathway is cofactor biosynthesis; coenzyme F420 biosynthesis. Guanylyltransferase that catalyzes the activation of phosphoenolpyruvate (PEP) as enolpyruvoyl-2-diphospho-5'-guanosine, via the condensation of PEP with GTP. It is involved in the biosynthesis of coenzyme F420, a hydride carrier cofactor. This is Phosphoenolpyruvate guanylyltransferase from Mycobacterium ulcerans (strain Agy99).